The sequence spans 295 residues: 15-cis-phytoene synthase (295 aa).

It belongs to the phytoene/squalene synthase family. Requires ATP as cofactor. Mn(2+) serves as cofactor.

It catalyses the reaction 2 (2E,6E,10E)-geranylgeranyl diphosphate = 15-cis-phytoene + 2 diphosphate. Its pathway is carotenoid biosynthesis; phytoene biosynthesis. With respect to regulation, significant inhibition is seen at GGPP concentrations above 100 uM. In terms of biological role, involved in the biosynthesis of carotenoids. Catalyzes stereoselectively the condensation of two molecules of geranylgeranyl diphosphate (GGPP) to give prephytoene diphosphate (PPPP) and the subsequent rearrangement of the cyclopropylcarbinyl intermediate to yield 15-cis-phytoene. The polypeptide is 15-cis-phytoene synthase (crtB) (Enterobacter agglomerans (Erwinia herbicola)).